A 457-amino-acid polypeptide reads, in one-letter code: Argininosuccinate lyase (457 aa).

Belongs to the lyase 1 family. Argininosuccinate lyase subfamily.

It is found in the cytoplasm. The catalysed reaction is 2-(N(omega)-L-arginino)succinate = fumarate + L-arginine. It functions in the pathway amino-acid biosynthesis; L-arginine biosynthesis; L-arginine from L-ornithine and carbamoyl phosphate: step 3/3. This is Argininosuccinate lyase from Histophilus somni (strain 129Pt) (Haemophilus somnus).